We begin with the raw amino-acid sequence, 475 residues long: UDP-N-acetylmuramate--L-alanine ligase (475 aa).

112-118 (GTHGKTT) contacts ATP.

The protein belongs to the MurCDEF family.

Its subcellular location is the cytoplasm. The enzyme catalyses UDP-N-acetyl-alpha-D-muramate + L-alanine + ATP = UDP-N-acetyl-alpha-D-muramoyl-L-alanine + ADP + phosphate + H(+). It functions in the pathway cell wall biogenesis; peptidoglycan biosynthesis. Cell wall formation. In Methylobacillus flagellatus (strain ATCC 51484 / DSM 6875 / VKM B-1610 / KT), this protein is UDP-N-acetylmuramate--L-alanine ligase.